The primary structure comprises 421 residues: Imidazolonepropionase (421 aa).

His-81 and His-83 together coordinate Fe(3+). Zn(2+) is bound by residues His-81 and His-83. Residues Arg-90, Tyr-153, and His-186 each coordinate 4-imidazolone-5-propanoate. Tyr-153 is an N-formimidoyl-L-glutamate binding site. His-251 serves as a coordination point for Fe(3+). Position 251 (His-251) interacts with Zn(2+). Residue Glu-254 coordinates 4-imidazolone-5-propanoate. Fe(3+) is bound at residue Asp-326. Residue Asp-326 participates in Zn(2+) binding. The N-formimidoyl-L-glutamate site is built by Asn-328 and Gly-330. Ser-331 is a 4-imidazolone-5-propanoate binding site.

Belongs to the metallo-dependent hydrolases superfamily. HutI family. Zn(2+) is required as a cofactor. Requires Fe(3+) as cofactor.

The protein resides in the cytoplasm. It catalyses the reaction 4-imidazolone-5-propanoate + H2O = N-formimidoyl-L-glutamate. Its pathway is amino-acid degradation; L-histidine degradation into L-glutamate; N-formimidoyl-L-glutamate from L-histidine: step 3/3. In terms of biological role, catalyzes the hydrolytic cleavage of the carbon-nitrogen bond in imidazolone-5-propanoate to yield N-formimidoyl-L-glutamate. It is the third step in the universal histidine degradation pathway. In Streptococcus pyogenes serotype M18 (strain MGAS8232), this protein is Imidazolonepropionase.